The chain runs to 154 residues: Transcriptional repressor NrdR (154 aa).

The segment at 3-34 is a zinc-finger region; it reads CPTCKYNGTRVVDSRPADDGNSIRRRRECEKC. In terms of domain architecture, ATP-cone spans 49 to 139; it reads LIVVKKDGAR…VYRQFKDISV (91 aa).

The protein belongs to the NrdR family. It depends on Zn(2+) as a cofactor.

Functionally, negatively regulates transcription of bacterial ribonucleotide reductase nrd genes and operons by binding to NrdR-boxes. The chain is Transcriptional repressor NrdR from Listeria innocua serovar 6a (strain ATCC BAA-680 / CLIP 11262).